Here is a 299-residue protein sequence, read N- to C-terminus: Taste receptor type 2 member 4 (299 aa).

At 1-9 (MLRLFYFSA) the chain is on the extracellular side. The helical transmembrane segment at 10 to 30 (VIASVILNFVGIIMNLFITVV) threads the bilayer. The Cytoplasmic portion of the chain corresponds to 31-46 (NCKTWVKSHRISSSDR). A helical membrane pass occupies residues 47–67 (ILFSLGITRFLMLGLFLVNTI). Residues 68-81 (YFVSSNMERSVYLS) lie on the Extracellular side of the membrane. The chain crosses the membrane as a helical span at residues 82-102 (AFFVLCFMFLDSSSLWFVTLL). Over 103-131 (NILYCVKITNFQHSVFLLLKRSISPKIPR) the chain is Cytoplasmic. The helical transmembrane segment at 132–152 (LLLAFVLISAFTTCLYITLSQ) threads the bilayer. Residues 153 to 172 (ASPFPELVTTRNNTSFNISE) are Extracellular-facing. Asn164, Asn165, and Asn169 each carry an N-linked (GlcNAc...) asparagine glycan. Residues 173–193 (GILSLVVSLVLSSSLQFIINV) form a helical membrane-spanning segment. Residues 194 to 230 (TSASLLIHSLRRHIQKMQKNATGFWNPQMEAHVGAMK) lie on the Cytoplasmic side of the membrane. Residues 231 to 251 (LMVYFLILYIPYSVATLVQYL) form a helical membrane-spanning segment. Residues 252-262 (PFYAGMDMGTK) lie on the Extracellular side of the membrane. Residues 263–283 (SICLIFATLYSPGHSVLIIIT) form a helical membrane-spanning segment. The Cytoplasmic portion of the chain corresponds to 284 to 299 (HPKLKTTAKKILCFKK).

Belongs to the G-protein coupled receptor T2R family.

It is found in the membrane. The protein resides in the cell projection. It localises to the cilium membrane. Gustducin-coupled receptor implicated in the perception of bitter compounds in the oral cavity and the gastrointestinal tract. Signals through PLCB2 and the calcium-regulated cation channel TRPM5. In airway epithelial cells, binding of denatonium increases the intracellular calcium ion concentration and stimulates ciliary beat frequency. This chain is Taste receptor type 2 member 4 (TAS2R4), found in Gorilla gorilla gorilla (Western lowland gorilla).